The sequence spans 1525 residues: MTRWPFNLLLLLSVAVRDCSNHRTVLTVGYLTALTGDLKTRQGLAISGALTMALDEVNKDPNLLPNVYLDLRWNDTKGDTVLATKAITEMICDGIATIFGPEGPCYVEAIVSQSRNIPMISYKCAEYRASAIPTFARTEPPDTQVVKSLLALLRYYAWNKFSILYEDVWSPVADLLKDQATKRNMTINHKQSFIDNRVKCCEQMLDCCRSGYWYQLVQNTMNRTRIYVFLGAANSLVDFMSSMETAGLFARGEYMVIFVDMMVYSEREAEKYLRRVDQITFMSNCHSTENFNQMARSLLVVASTPPTKDYIQFTKQVQKYSSKPPFNLEIPRLFVESNFSKFISIYAAYLYDSVKLYAWAVDKMLREETRVLTDDVIFEVASNGTRVIDTIIKNRTYMSITGSKIKIDQYGDSEGNFSVLAYKPHKWNNSNNMPCNYHMVPVAYFHQGEEHPEYKLINGSIDWPSGGEKPADEPMCGFANELCKKDDTHYTSTVAAVVLGVLLFCSGVITMSIYRKWKIELEIEGLLWKIDPNEIKGYSGNEIVSSPSKVSLMSAQSYGSRWTNQFVTSTGRLRGAVVRIKELKFPRKRDISREIMKEMRLLRELRHDNINSFIGASVEPTRILLVTDYCAKGSLYDIIENEDIKLDDLFIASLIHDLIKGMIYIHNSQLVYHGNLKSSNCVVTSRWMLQVTDFGLHELRQCAENESIGEHQHYRNQLWRAPELLRNHIHGSQKGDVYAFAIIMYEIFSRKGPFGQINFEPKEIVDYVKKLPLKGEDPFRPEVESIIEAESCPDYVLACIRDCWAEDPEERPEFSVIRNRLKKMRGGKTKNIMDQMMEMMEKYANNLEDIVTERTRLLCEEKMKTEDLLHRMLPQSVAEKLTMGQGVEPVSYDLVTIYFSDIVGFTAMSAESTPLQVVNFLNDLYTVFDRIIRGYDVYKVETIGDAYMVVSGLPIKNGDRHAGEIASMALELLHAVKQHRIAHRPNETLKLRIGMHTGPVVAGVVGLTMPRYCLFGDTVNTASRMESNGEALKIHISNKCKLALDKLGGGYITEKRGLVNMKGKGDVVTWWLTGANENAIQKKLVDMMDMPPPLFSRPRKSPKLNPDSRQPSIQAMHFCGTGSRRQSTVPRAMDGESTYSLQGSVRESPRMVSKRDRDRERPPINGLGAGHFVGGALLESAQASLSTLNHSETNETNCDMDGGSGGVSGSGSGLVRQPNALHKPLAMVRPHRIISAAQLPQLGDNDDDSADTLLRESRSLDPMPMQQLRKRHDRVKLPPSKLSKNNSRSLDTGVSLISGNPNGEVHSSQLDLDNEMTANPVDATDGYDDELGLLMRHDNGQLPALRYSGSFPNAQISIVPTGRSAGGGGGGREGGGSNCAKHLNNNCNGGVNVEDDLESPLLQRQASLSVPPEEMLAHNKRWHSLEHMDGPGGHGGNSVSYAADIDNRHPGDLDFFSGSSNQHHRSKAAGGSKLTNWMTNIFKGNGVRSGEARRVGILPSGVHGARTGFTDMAASAAARDRESIV.

The N-terminal stretch at 1-19 (MTRWPFNLLLLLSVAVRDC) is a signal peptide. Residues 20–493 (SNHRTVLTVG…KKDDTHYTST (474 aa)) lie on the Extracellular side of the membrane. Asparagine 74, asparagine 184, asparagine 222, asparagine 338, asparagine 383, asparagine 394, asparagine 416, asparagine 428, and asparagine 458 each carry an N-linked (GlcNAc...) asparagine glycan. The helical transmembrane segment at 494-514 (VAAVVLGVLLFCSGVITMSIY) threads the bilayer. The Cytoplasmic segment spans residues 515–1525 (RKWKIELEIE…AAARDRESIV (1011 aa)). Positions 547–824 (PSKVSLMSAQ…SVIRNRLKKM (278 aa)) constitute a Protein kinase domain. ATP is bound by residues 553 to 561 (MSAQSYGSR) and lysine 581. Residues 896-1026 (TIYFSDIVGF…DTVNTASRME (131 aa)) enclose the Guanylate cyclase domain. The Mg(2+) site is built by aspartate 901, isoleucine 902, and aspartate 945. Disordered regions lie at residues 1122-1168 (GSRR…NGLG), 1192-1217 (ETNETNCDMDGGSGGVSGSGSGLVRQ), and 1256-1308 (ESRS…VHSS). Residues 1147–1162 (ESPRMVSKRDRDRERP) are compositionally biased toward basic and acidic residues. The span at 1202–1212 (GGSGGVSGSGS) shows a compositional bias: gly residues. The segment covering 1282 to 1308 (LSKNNSRSLDTGVSLISGNPNGEVHSS) has biased composition (polar residues).

Belongs to the adenylyl cyclase class-4/guanylyl cyclase family. In terms of assembly, interacts with the semaphorin 1A receptor PlexA; PlexA enhances Gyc76C catalytic activity. Interacts with the PDZ domain-containing protein kermit; kermit increases cell surface expression of Gyc76C. As to expression, in the adult, widely distributed in the head and thorax with highest levels in the optic lobe and central brain and expression also detected in the retina. Expressed at similar levels in adult head and body. In females, highly expressed in oocytes with lower levels in the digestive tract. In mid-embryogenesis, enriched in the circular visceral mesoderm that overlies the migrating salivary gland and in the fat body that underlies the gland but at background levels in the gland itself. In late embryogenesis, detected in the mature salivary gland, in the somatic body wall muscles and the tendon cells to which the muscles attach, and in the constricting midgut. Also expressed in migrating tracheal cells at mid-embryogenesis and in the developed trachea at the end of embryogenesis with enrichment in the apical domains.

It is found in the cell membrane. The catalysed reaction is GTP = 3',5'-cyclic GMP + diphosphate. Guanylate cyclase involved in the production of the second messenger cGMP. Acts as a receptor for the NPLP1-4 peptide and modulates the innate immune IMD pathway in response to salt stress by inducing nuclear translocation of NF-kappa-B protein Rel which leads to increased expression of the antimicrobial peptide diptericin. Plays a role in Sema-1a-mediated axon repulsion which is required for the correct establishment of neuromuscular connectivity. Required in developing embryonic somatic muscle for correct patterning of ventral and lateral muscles and for localization of integrin beta-ps at developing dorsal muscle myotendinous junctions. Required for invagination, migration and lumen shape of the embryonic salivary gland by regulating the localization of the integrin-binding protein rhea/Talin to the visceral mesoderm surrounding the gland and maintaining the laminin matrix. Required in the developing wing to regulate extracellular matrix (ECM) organization by activating the cGMP-dependent protein kinase For which represses the activity of matrix metalloproteases such as Mmp2 and decreases ECM matrix reorganization. The protein is Receptor-type guanylate cyclase Gyc76C of Drosophila melanogaster (Fruit fly).